The primary structure comprises 93 residues: Putative pterin-4-alpha-carbinolamine dehydratase (93 aa).

Belongs to the pterin-4-alpha-carbinolamine dehydratase family.

The enzyme catalyses (4aS,6R)-4a-hydroxy-L-erythro-5,6,7,8-tetrahydrobiopterin = (6R)-L-erythro-6,7-dihydrobiopterin + H2O. This chain is Putative pterin-4-alpha-carbinolamine dehydratase, found in Mycolicibacterium vanbaalenii (strain DSM 7251 / JCM 13017 / BCRC 16820 / KCTC 9966 / NRRL B-24157 / PYR-1) (Mycobacterium vanbaalenii).